Consider the following 115-residue polypeptide: Sericin-1 (115 aa).

Residues 1–115 (GSSGSSGSSG…GGSSSTSSSN (115 aa)) are disordered.

In terms of tissue distribution, produced exclusively in the middle (MSG) section of silk glands.

It is found in the secreted. Its function is as follows. Provides the silk fibroin thread with a sticky coating. Acts as a cement by sticking silk threads together. In Galleria mellonella (Greater wax moth), this protein is Sericin-1 (SER1).